A 171-amino-acid chain; its full sequence is S-ribosylhomocysteine lyase (171 aa).

The Fe cation site is built by His54, His58, and Cys128.

It belongs to the LuxS family. Homodimer. The cofactor is Fe cation.

It carries out the reaction S-(5-deoxy-D-ribos-5-yl)-L-homocysteine = (S)-4,5-dihydroxypentane-2,3-dione + L-homocysteine. Its function is as follows. Involved in the synthesis of autoinducer 2 (AI-2) which is secreted by bacteria and is used to communicate both the cell density and the metabolic potential of the environment. The regulation of gene expression in response to changes in cell density is called quorum sensing. Catalyzes the transformation of S-ribosylhomocysteine (RHC) to homocysteine (HC) and 4,5-dihydroxy-2,3-pentadione (DPD). The chain is S-ribosylhomocysteine lyase from Cronobacter sakazakii (strain ATCC BAA-894) (Enterobacter sakazakii).